The following is a 91-amino-acid chain: Ragulator complex protein LAMTOR5 homolog (91 aa).

The protein belongs to the LAMTOR5 family. Part of the Ragulator complex.

The protein localises to the cytoplasm. The protein resides in the lysosome. Regulator of the TOR pathway, a signaling cascade that promotes cell growth in response to growth factors, energy levels, and amino acids. As part of the Ragulator complex, may activate the TOR signaling cascade in response to amino acids. The protein is Ragulator complex protein LAMTOR5 homolog of Ixodes scapularis (Black-legged tick).